Consider the following 465-residue polypeptide: Asparagine--tRNA ligase (465 aa).

The protein belongs to the class-II aminoacyl-tRNA synthetase family. As to quaternary structure, homodimer.

The protein localises to the cytoplasm. The enzyme catalyses tRNA(Asn) + L-asparagine + ATP = L-asparaginyl-tRNA(Asn) + AMP + diphosphate + H(+). This chain is Asparagine--tRNA ligase, found in Pseudoalteromonas translucida (strain TAC 125).